A 380-amino-acid polypeptide reads, in one-letter code: Putative 8-amino-7-oxononanoate synthase (380 aa).

Arg-18 contacts substrate. 105–106 (GY) is a pyridoxal 5'-phosphate binding site. His-130 contributes to the substrate binding site. Pyridoxal 5'-phosphate is bound by residues Ser-178, 204–207 (DEAH), and 235–238 (TFGK). Lys-238 is modified (N6-(pyridoxal phosphate)lysine). Thr-352 contacts substrate.

It belongs to the class-II pyridoxal-phosphate-dependent aminotransferase family. BioF subfamily. Homodimer. Requires pyridoxal 5'-phosphate as cofactor.

The enzyme catalyses 6-carboxyhexanoyl-[ACP] + L-alanine + H(+) = (8S)-8-amino-7-oxononanoate + holo-[ACP] + CO2. Its pathway is cofactor biosynthesis; biotin biosynthesis. Functionally, catalyzes the decarboxylative condensation of pimeloyl-[acyl-carrier protein] and L-alanine to produce 8-amino-7-oxononanoate (AON), [acyl-carrier protein], and carbon dioxide. The protein is Putative 8-amino-7-oxononanoate synthase (bioF) of Glaesserella parasuis serovar 5 (strain SH0165) (Haemophilus parasuis).